The sequence spans 297 residues: Tumor necrosis factor receptor superfamily member 27 (297 aa).

The Extracellular portion of the chain corresponds to 1-138; it reads MDCQENEYWD…TPTVPPQEAT (138 aa). TNFR-Cys repeat units follow at residues 2 to 41, 43 to 83, and 85 to 118; these read DCQE…DAYC, ACPP…NAVC, and DCLP…EVQC. Intrachain disulfides connect Cys-3–Cys-15, Cys-18–Cys-31, Cys-21–Cys-41, Cys-44–Cys-58, Cys-61–Cys-75, Cys-64–Cys-83, Cys-86–Cys-104, and Cys-107–Cys-118. An N-linked (GlcNAc...) asparagine glycan is attached at Asn-74. Residues 139 to 159 form a helical; Signal-anchor for type III membrane protein membrane-spanning segment; the sequence is LVALVSSLLVVFTLAFLGLFF. At 160-297 the chain is on the cytoplasmic side; it reads LYCKQFFNRH…LNVPFEVPSP (138 aa). A compositionally biased stretch (polar residues) spans 272–281; it reads ETLGGNTVES. Positions 272 to 297 are disordered; the sequence is ETLGGNTVESTGDRLELNVPFEVPSP.

Associates with TRAF1, TRAF3 and TRAF6.

It localises to the membrane. Functionally, receptor for EDA isoform A2, but not for EDA isoform A1. Mediates the activation of the NF-kappa-B and JNK pathways. Activation seems to be mediated by binding to TRAF3 and TRAF6. The protein is Tumor necrosis factor receptor superfamily member 27 (EDA2R) of Homo sapiens (Human).